Here is a 212-residue protein sequence, read N- to C-terminus: Ribosomal RNA large subunit methyltransferase E (212 aa).

Residues Gly-56, Trp-58, Asp-78, Asp-94, and Asp-117 each contribute to the S-adenosyl-L-methionine site. Catalysis depends on Lys-157, which acts as the Proton acceptor.

The protein belongs to the class I-like SAM-binding methyltransferase superfamily. RNA methyltransferase RlmE family.

The protein resides in the cytoplasm. The catalysed reaction is uridine(2552) in 23S rRNA + S-adenosyl-L-methionine = 2'-O-methyluridine(2552) in 23S rRNA + S-adenosyl-L-homocysteine + H(+). Functionally, specifically methylates the uridine in position 2552 of 23S rRNA at the 2'-O position of the ribose in the fully assembled 50S ribosomal subunit. This Ehrlichia chaffeensis (strain ATCC CRL-10679 / Arkansas) protein is Ribosomal RNA large subunit methyltransferase E.